Reading from the N-terminus, the 371-residue chain is MEGWLGNLLAKSVKDKYIPVIVGRRDLWNKVFTPKSVNPDDNYEALEIVGDGVASYFFPSYFLKRFPQLNSPKGVKTVARLKIYYGSKKSFSSIADSLGFWKFIRSGPVPVNPSTRESLLEDTFEAFLGAVCMAVDDEYSIDGLGAVVAYKIMADIFDDMDISLEYTALFDTVTRLKELMDVKKDVLGGDAVYNHRGDTTVITLKGRVIGKATGAIKRDRAKEAAGQALDLLRREGHFREHDDDAVVKVAKGPAGDGLVVAQSALGGFTVFGAESGVVEGSGGTVAQALSRVVGTKRPSAVEVAGGDYKSLLKEYLESVGETDSVNYIHEGVTVTMTRKGKPVATANHLVKKVREQLASRDYYRTVHAKGV.

The region spanning 10–136 is the RNase III domain; sequence AKSVKDKYIP…FLGAVCMAVD (127 aa).

This sequence belongs to the IIV-6 142R family.

It catalyses the reaction Endonucleolytic cleavage to 5'-phosphomonoester.. Functionally, digests double-stranded RNA. The sequence is that of Putative ribonuclease 3 from Frog virus 3 (isolate Goorha) (FV-3).